The primary structure comprises 142 residues: Hemoglobin subunit alpha-1 (142 aa).

One can recognise a Globin domain in the interval 2–142 (KLSADDKHNV…VGYVLASKYR (141 aa)). H59 lines the O2 pocket. H88 provides a ligand contact to heme b.

Belongs to the globin family. As to quaternary structure, major hemoglobin is a heterotetramer of two alpha-1 chains and two beta-1 chains. As to expression, red blood cells.

Functionally, involved in oxygen transport from the lung to the various peripheral tissues. This chain is Hemoglobin subunit alpha-1, found in Triturus cristatus (Great crested newt).